The primary structure comprises 572 residues: Sialate:O-sulfotransferase 1 (572 aa).

Residues 1-14 are Cytoplasmic-facing; that stretch reads MAKPFFRLQKFLRR. The chain crosses the membrane as a helical; Signal-anchor for type II membrane protein span at residues 15-35; that stretch reads TQFLLLFLTAAYLMTGSLLLL. Topologically, residues 36-572 are extracellular; it reads QRARVALPQA…AGLPREYVPR (537 aa). Residue asparagine 105 is glycosylated (N-linked (GlcNAc...) asparagine). 2 consecutive WSC domains span residues 139–231 and 242–337; these read RGNY…YSVG and TATY…DTRC. N-linked (GlcNAc...) asparagine glycosylation occurs at asparagine 254.

It belongs to the WSCD family.

It is found in the golgi apparatus membrane. The enzyme catalyses a ganglioside GM1b + 3'-phosphoadenylyl sulfate = an 8-O-sulfo-ganglioside GM1b + adenosine 3',5'-bisphosphate + H(+). In terms of biological role, sialate:O-sulfotransferase which catalyzes 8-O-sulfation at the Sia-glycan level using 3'-phosphoadenosine 5'-phosphosulfate (PAPS) as a donor, forming 8-O-sulfated Sia (Sia8S)-glycans. Displays selectivity toward glycolipids such as GM1 gangliosides. This Mus musculus (Mouse) protein is Sialate:O-sulfotransferase 1 (Wscd1).